Consider the following 191-residue polypeptide: Prostaglandin-H2 D-isomerase (191 aa).

Residues 1–24 form the signal peptide; that stretch reads MAALHTLWMGLVLLGVLGVLQTRA. Pyrrolidone carboxylic acid is present on Gln25. Asn51 is a glycosylation site (N-linked (GlcNAc...) asparagine). Cys65 serves as the catalytic Nucleophile. Asn78 is a glycosylation site (N-linked (GlcNAc...) asparagine). Cysteines 89 and 186 form a disulfide.

Belongs to the calycin superfamily. Lipocalin family. Monomer. In terms of processing, N- and O-glycosylated. Both N-glycosylation recognition sites are almost quantitatively occupied by N-glycans of the biantennary complex type, with a considerable proportion of structures bearing a bisecting GlcNAc. N-glycan at Asn-78: dHex1Hex5HexNAc4. Agalacto structure as well as sialylated and nonsialylated oligosaccharides bearing alpha2-3- and/or alpha2-6-linked NeuNAc are present.

Its subcellular location is the rough endoplasmic reticulum. The protein localises to the nucleus membrane. The protein resides in the golgi apparatus. It is found in the cytoplasm. It localises to the perinuclear region. Its subcellular location is the secreted. It carries out the reaction prostaglandin H2 = prostaglandin D2. Catalyzes the conversion of PGH2 to PGD2, a prostaglandin involved in smooth muscle contraction/relaxation and a potent inhibitor of platelet aggregation. Involved in a variety of CNS functions, such as sedation, NREM sleep and PGE2-induced allodynia, and may have an anti-apoptotic role in oligodendrocytes. Binds small non-substrate lipophilic molecules, including biliverdin, bilirubin, retinal, retinoic acid and thyroid hormone, and may act as a scavenger for harmful hydrophobic molecules and as a secretory retinoid and thyroid hormone transporter. Possibly involved in development and maintenance of the blood-brain, blood-retina, blood-aqueous humor and blood-testis barrier. It is likely to play important roles in both maturation and maintenance of the central nervous system and male reproductive system. Involved in PLA2G3-dependent maturation of mast cells. PLA2G3 is secreted by immature mast cells and acts on nearby fibroblasts upstream to PTDGS to synthesize PGD2, which in turn promotes mast cell maturation and degranulation via PTGDR. The chain is Prostaglandin-H2 D-isomerase (PTGDS) from Felis catus (Cat).